We begin with the raw amino-acid sequence, 228 residues long: Geranylgeranylglyceryl phosphate synthase (228 aa).

K11 contributes to the sn-glycerol 1-phosphate binding site. Residues D13 and T39 each coordinate Mg(2+). Sn-glycerol 1-phosphate is bound by residues 159–164, G189, and 209–210; these read YIEYSG and GN.

This sequence belongs to the GGGP/HepGP synthase family. Group I subfamily. Requires Mg(2+) as cofactor.

It is found in the cytoplasm. It carries out the reaction sn-glycerol 1-phosphate + (2E,6E,10E)-geranylgeranyl diphosphate = sn-3-O-(geranylgeranyl)glycerol 1-phosphate + diphosphate. Its pathway is membrane lipid metabolism; glycerophospholipid metabolism. Prenyltransferase that catalyzes the transfer of the geranylgeranyl moiety of geranylgeranyl diphosphate (GGPP) to the C3 hydroxyl of sn-glycerol-1-phosphate (G1P). This reaction is the first ether-bond-formation step in the biosynthesis of archaeal membrane lipids. The protein is Geranylgeranylglyceryl phosphate synthase of Methanoregula boonei (strain DSM 21154 / JCM 14090 / 6A8).